A 111-amino-acid chain; its full sequence is Guanylate cyclase activator 2B (111 aa).

A signal peptide spans 1–26; it reads MGSRTLLGHLSVLAVVLLLLLQGTQS. The propeptide occupies 27 to 96; the sequence is VDIKYQGYQV…SILQALRTMD (70 aa). 3 disulfides stabilise this stretch: cysteine 67–cysteine 80, cysteine 100–cysteine 108, and cysteine 103–cysteine 111.

It belongs to the guanylin family.

It localises to the secreted. Endogenous activator of intestinal guanylate cyclase. It stimulates this enzyme through the same receptor binding region as the heat-stable enterotoxins. May be a potent physiological regulator of intestinal fluid and electrolyte transport. May be an autocrine/paracrine regulator of intestinal salt and water transport. This Cavia porcellus (Guinea pig) protein is Guanylate cyclase activator 2B (GUCA2B).